Consider the following 656-residue polypeptide: Ribosome quality control complex subunit 1 (656 aa).

Residues 1–11 (MSSRALRKLQR) are compositionally biased toward basic residues. Disordered stretches follow at residues 1–35 (MSSR…FSST), 51–122 (NNAI…LESS), and 634–656 (LFTS…GQGD). The span at 17–32 (LLEEALDSESDEDDEF) shows a compositional bias: acidic residues. The span at 51–63 (NNAINSEAEKSVS) shows a compositional bias: basic and acidic residues. A phosphoserine mark is found at Ser-56, Ser-61, and Ser-63. Residues 83 to 101 (KKAKNKKKKKKQQKKKKVT) show a composition bias toward basic residues. Positions 102–122 (GKRDLDNQSSDNEKLEGLESS) are enriched in basic and acidic residues. Phosphoserine is present on residues Ser-110 and Ser-111.

Belongs to the TCF25 family. As to quaternary structure, component of the ribosome quality control complex (RQC), composed of the E3 ubiquitin ligase rkr1/ltn1, rqc1 and mtr1/rqc2, as well as cdc48 and its ubiquitin-binding cofactors. RQC forms a stable complex with 60S ribosomal subunits.

It is found in the cytoplasm. Functionally, component of the ribosome quality control complex (RQC), a ribosome-associated complex that mediates ubiquitination and extraction of incompletely synthesized nascent chains for proteasomal degradation. Within the RQC complex, rqc1 is essential for the recruitment of cdc48 to incompletely synthesized nascent polypeptides that are ubiquitinated by rkr1/ltn1. The polypeptide is Ribosome quality control complex subunit 1 (Schizosaccharomyces pombe (strain 972 / ATCC 24843) (Fission yeast)).